The sequence spans 205 residues: Large ribosomal subunit protein uL4 (205 aa).

Positions 43–95 are disordered; that stretch reads RSGNRAQKDRAEVKHSTKKPWRQKGTGRARAGMTSSPLWRGGGRAFPNSPEEN. The span at 48–57 shows a compositional bias: basic and acidic residues; that stretch reads AQKDRAEVKH. The span at 58-69 shows a compositional bias: basic residues; that stretch reads STKKPWRQKGTG.

This sequence belongs to the universal ribosomal protein uL4 family. As to quaternary structure, part of the 50S ribosomal subunit.

In terms of biological role, one of the primary rRNA binding proteins, this protein initially binds near the 5'-end of the 23S rRNA. It is important during the early stages of 50S assembly. It makes multiple contacts with different domains of the 23S rRNA in the assembled 50S subunit and ribosome. Functionally, forms part of the polypeptide exit tunnel. The polypeptide is Large ribosomal subunit protein uL4 (Bordetella pertussis (strain Tohama I / ATCC BAA-589 / NCTC 13251)).